We begin with the raw amino-acid sequence, 498 residues long: Capsanthin/capsorubin synthase, chromoplastic (498 aa).

The N-terminal 52 residues, Met1–Cys52, are a transit peptide targeting the chromoplast. Val84–Pro112 serves as a coordination point for NAD(+). The FLEET motif motif lies at Phe293–Thr297.

Belongs to the lycopene cyclase family. As to quaternary structure, monomer. It depends on FAD as a cofactor. NADPH serves as cofactor.

It localises to the plastid. The protein resides in the chromoplast. It catalyses the reaction all-trans-violaxanthin = all-trans-capsorubin. The catalysed reaction is all-trans-antheraxanthin = all-trans-capsanthin. The enzyme catalyses all-trans-violaxanthin = (5R,6S)-5,6-epoxi-capsanthin. It carries out the reaction (5R,6S)-5,6-epoxi-capsanthin = all-trans-capsorubin. The protein operates within carotenoid biosynthesis; capsanthin biosynthesis; capsanthin from antheraxanthin: step 1/1. Its pathway is carotenoid biosynthesis; capsorubin biosynthesis; capsorubin from violaxanthin: step 1/1. In terms of biological role, catalyzes the conversion of the ubiquitous 5,6-epoxycarotenoids, antheraxanthin and violaxanthin, into capsanthin and capsorubin, respectively. The protein is Capsanthin/capsorubin synthase, chromoplastic of Capsicum annuum (Capsicum pepper).